Here is a 429-residue protein sequence, read N- to C-terminus: Glutamate-1-semialdehyde 2,1-aminomutase (429 aa).

N6-(pyridoxal phosphate)lysine is present on Lys265.

The protein belongs to the class-III pyridoxal-phosphate-dependent aminotransferase family. HemL subfamily. Homodimer. Requires pyridoxal 5'-phosphate as cofactor.

It localises to the cytoplasm. The catalysed reaction is (S)-4-amino-5-oxopentanoate = 5-aminolevulinate. It participates in porphyrin-containing compound metabolism; protoporphyrin-IX biosynthesis; 5-aminolevulinate from L-glutamyl-tRNA(Glu): step 2/2. This chain is Glutamate-1-semialdehyde 2,1-aminomutase, found in Legionella pneumophila (strain Lens).